We begin with the raw amino-acid sequence, 385 residues long: UDP-N-acetylglucosamine--N-acetylmuramyl-(pentapeptide) pyrophosphoryl-undecaprenol N-acetylglucosamine transferase (385 aa).

UDP-N-acetyl-alpha-D-glucosamine-binding positions include 11 to 13 (TGG), asparagine 117, arginine 160, serine 215, and glutamine 317.

It belongs to the glycosyltransferase 28 family. MurG subfamily.

The protein localises to the cell inner membrane. It catalyses the reaction di-trans,octa-cis-undecaprenyl diphospho-N-acetyl-alpha-D-muramoyl-L-alanyl-D-glutamyl-meso-2,6-diaminopimeloyl-D-alanyl-D-alanine + UDP-N-acetyl-alpha-D-glucosamine = di-trans,octa-cis-undecaprenyl diphospho-[N-acetyl-alpha-D-glucosaminyl-(1-&gt;4)]-N-acetyl-alpha-D-muramoyl-L-alanyl-D-glutamyl-meso-2,6-diaminopimeloyl-D-alanyl-D-alanine + UDP + H(+). It functions in the pathway cell wall biogenesis; peptidoglycan biosynthesis. Functionally, cell wall formation. Catalyzes the transfer of a GlcNAc subunit on undecaprenyl-pyrophosphoryl-MurNAc-pentapeptide (lipid intermediate I) to form undecaprenyl-pyrophosphoryl-MurNAc-(pentapeptide)GlcNAc (lipid intermediate II). This is UDP-N-acetylglucosamine--N-acetylmuramyl-(pentapeptide) pyrophosphoryl-undecaprenol N-acetylglucosamine transferase from Rickettsia prowazekii (strain Madrid E).